The primary structure comprises 1237 residues: Anion exchange protein 2 (1237 aa).

Residues 1–237 (MSSAPRRPAS…SYNLQERRRI (237 aa)) are disordered. The Cytoplasmic segment spans residues 1 to 703 (MSSAPRRPAS…SDFRDALDPQ (703 aa)). Basic and acidic residues-rich tracts occupy residues 37–49 (ELHRTLGVERFEE) and 58–75 (GGEEPGRSYGEEDFEYHR). Basic residues-rich tracts occupy residues 76–85 (QSSHHIHHPL) and 94–110 (RRRKTPQGPGRKPRRRP). Residue S113 is modified to Phosphoserine. The span at 122–133 (EEGEEDEEEANE) shows a compositional bias: acidic residues. Residues 137 to 151 (ARAPTEPSPASTPSS) are compositionally biased toward low complexity. Phosphoserine occurs at positions 144, 170, and 172. Residues 206–215 (TAGGDNGGAS) are compositionally biased toward gly residues. Phosphoserine is present on S239. The residue at position 253 (T253) is a Phosphothreonine. N6-methyllysine is present on K270. A disordered region spans residues 281 to 316 (RRHLVRKNAKGSAQSSREGREPGPTPRSRPRAPHKP). S439 carries the phosphoserine modification. A disordered region spans residues 445-464 (SLLGHHHGQGAESDPHVTEP). A run of 4 helical transmembrane segments spans residues 704–727 (CVAAVIFIYFAALSPAITFGGLLG), 733–770 (LIGVSELIMSTALQGVIFCLLGAQPLLVIGFSGPLLVF), 790–812 (VWIGFWLVLLALLMVALEGSFLV), and 822–843 (IFAFLISLIFIYETFYKLIKIF). The segment at 704–1237 (CVAAVIFIYF…DEYNEMPMPV (534 aa)) is membrane (anion exchange). Topologically, residues 844 to 896 (QEHPLHGCSVSNSSETDSSENATWAGAGSTLGPANRSSAGQAGQGRPRGQPNT) are extracellular. Residues N855, N864, and N878 are each glycosylated (N-linked (GlcNAc...) asparagine). The chain crosses the membrane as a helical span at residues 897–914 (ALLSLVLMAGTFFIAFFL). Over 915–929 (RKFKNSRFFPGRIRR) the chain is Cytoplasmic. The next 5 helical transmembrane spans lie at 930-950 (VIGDFGVPIAILIMVLVDYSI), 984-1006 (PFPVWMMVASLLPAILVFILIFM), 1032-1053 (LLLIVAMGGICALFGLPWLAAA), 1087-1132 (VTGL…IQFY), and 1159-1195 (MHLFTALQLLCLALLWAVMSTAASLAFPFILILTVPL). C1169 is lipidated: S-palmitoyl cysteine.

The protein belongs to the anion exchanger (TC 2.A.31) family. In terms of tissue distribution, expressed in the ileum (at protein level).

The protein localises to the cell membrane. The protein resides in the apical cell membrane. Its subcellular location is the basolateral cell membrane. It catalyses the reaction hydrogencarbonate(in) + chloride(out) = hydrogencarbonate(out) + chloride(in). In terms of biological role, sodium-independent anion exchanger which mediates the electroneutral exchange of chloride for bicarbonate ions across the cell membrane. Plays an important role in osteoclast differentiation and function. Regulates bone resorption and calpain-dependent actin cytoskeleton organization in osteoclasts via anion exchange-dependent control of pH. Essential for intracellular pH regulation in CD8(+) T-cells upon CD3 stimulation, modulating CD8(+) T-cell response. The chain is Anion exchange protein 2 (SLC4A2) from Oryctolagus cuniculus (Rabbit).